Consider the following 656-residue polypeptide: FAST kinase domain-containing protein 3, mitochondrial (656 aa).

Positions 587 to 645 (VALCIDGPQRFCLGSKHLLGKEAIKQRHLRLLGYQVVQVPYHELELLTSRLELVDYLQR) constitute an RAP domain.

Belongs to the FAST kinase family.

Its subcellular location is the mitochondrion. Functionally, required for normal mitochondrial respiration. Increases steady-state levels and half-lives of a subset of mature mitochondrial mRNAs MT-ND2, MT-ND3, MT-CYTB, MT-CO2, and MT-ATP8/6. Promotes MT-CO1 mRNA translation and increases mitochondrial complex IV assembly and activity. This is FAST kinase domain-containing protein 3, mitochondrial (Fastkd3) from Rattus norvegicus (Rat).